A 199-amino-acid polypeptide reads, in one-letter code: Recombination protein RecR (199 aa).

The segment at 57–72 (CSICGNFTDRDPCRLC) adopts a C4-type zinc-finger fold. The region spanning 80–175 (SCICVVEEAR…KVTRLAYGLP (96 aa)) is the Toprim domain.

This sequence belongs to the RecR family.

In terms of biological role, may play a role in DNA repair. It seems to be involved in an RecBC-independent recombinational process of DNA repair. It may act with RecF and RecO. The chain is Recombination protein RecR from Moorella thermoacetica (strain ATCC 39073 / JCM 9320).